Reading from the N-terminus, the 277-residue chain is Diaminopimelate epimerase (277 aa).

Substrate contacts are provided by N17, Q50, and N68. C77 serves as the catalytic Proton donor. Substrate-binding positions include G78–N79, N162, N195, and E213–R214. C222 acts as the Proton acceptor in catalysis. G223–T224 is a substrate binding site.

This sequence belongs to the diaminopimelate epimerase family. As to quaternary structure, homodimer.

Its subcellular location is the cytoplasm. The catalysed reaction is (2S,6S)-2,6-diaminopimelate = meso-2,6-diaminopimelate. It participates in amino-acid biosynthesis; L-lysine biosynthesis via DAP pathway; DL-2,6-diaminopimelate from LL-2,6-diaminopimelate: step 1/1. In terms of biological role, catalyzes the stereoinversion of LL-2,6-diaminopimelate (L,L-DAP) to meso-diaminopimelate (meso-DAP), a precursor of L-lysine and an essential component of the bacterial peptidoglycan. This Phenylobacterium zucineum (strain HLK1) protein is Diaminopimelate epimerase.